The primary structure comprises 188 residues: MDMITLFGLALALAMDAFAVALGCGLTLERLTGRHLFRLGWHFGLFQAMMPIIGWLAGLTVQKWIETYDHWVAFGLLVCVGGKMIHEAFQDEETRESRDDPTRGMSLIMLSVATSIDALAVGLSLAIVGISVWFPALIIGIIAGVMTVIGMLLGRRAGARWGQRVEIAGGLILIGIGLKILWEHTLGM.

Transmembrane regions (helical) follow at residues 3-23 (MITLFGLALALAMDAFAVALG), 39-59 (LGWHFGLFQAMMPIIGWLAGL), 65-85 (IETYDHWVAFGLLVCVGGKMI), 104-124 (GMSLIMLSVATSIDALAVGLS), 125-145 (LAIVGISVWFPALIIGIIAGV), and 167-187 (IAGGLILIGIGLKILWEHTLG).

It belongs to the MntP (TC 9.B.29) family.

It localises to the cell inner membrane. Functionally, probably functions as a manganese efflux pump. The polypeptide is Putative manganese efflux pump MntP (Syntrophotalea carbinolica (strain DSM 2380 / NBRC 103641 / GraBd1) (Pelobacter carbinolicus)).